The sequence spans 821 residues: Ent-pimara-8(14),15-diene synthase (821 aa).

Mg(2+)-binding residues include Asp-556, Asp-560, Asn-701, Thr-705, and Glu-709. A DDXXD motif motif is present at residues 556-560; the sequence is DDFFD.

This sequence belongs to the terpene synthase family. The cofactor is Mg(2+). In terms of tissue distribution, highly expressed in roots, at intermediate levels in stems and at lower levels in leaves.

It carries out the reaction ent-copalyl diphosphate = ent-pimara-8(14),15-diene + diphosphate. Its pathway is secondary metabolite biosynthesis; terpenoid biosynthesis. In terms of biological role, involved in the biosynthesis of ent-kaurene diterpenoids natural products. Catalyzes the conversion of ent-copalyl diphosphate to ent-pimara-8(14),15-diene. The chain is Ent-pimara-8(14),15-diene synthase from Oryza sativa subsp. japonica (Rice).